A 362-amino-acid chain; its full sequence is Protein ABHD12B (362 aa).

It belongs to the serine esterase family.

The protein is Protein ABHD12B of Homo sapiens (Human).